A 382-amino-acid chain; its full sequence is Glutamyl-tRNA reductase (382 aa).

Substrate-binding positions include 38–41 (TCNR), S85, 90–92 (ENQ), and Q96. C39 acts as the Nucleophile in catalysis. 164–169 (GAGEMG) is an NADP(+) binding site.

The protein belongs to the glutamyl-tRNA reductase family. As to quaternary structure, homodimer.

It catalyses the reaction (S)-4-amino-5-oxopentanoate + tRNA(Glu) + NADP(+) = L-glutamyl-tRNA(Glu) + NADPH + H(+). Its pathway is porphyrin-containing compound metabolism; protoporphyrin-IX biosynthesis; 5-aminolevulinate from L-glutamyl-tRNA(Glu): step 1/2. Catalyzes the NADPH-dependent reduction of glutamyl-tRNA(Glu) to glutamate 1-semialdehyde (GSA). The polypeptide is Glutamyl-tRNA reductase (Methanococcus maripaludis (strain C6 / ATCC BAA-1332)).